The sequence spans 280 residues: Pantothenate synthetase (280 aa).

Met30–His37 serves as a coordination point for ATP. His37 (proton donor) is an active-site residue. Residue Gln61 participates in (R)-pantoate binding. A beta-alanine-binding site is contributed by Gln61. Gly147–Asp150 provides a ligand contact to ATP. (R)-pantoate is bound at residue Gln153. Residues Val176 and Met184–Arg187 contribute to the ATP site.

Belongs to the pantothenate synthetase family. As to quaternary structure, homodimer.

It is found in the cytoplasm. The catalysed reaction is (R)-pantoate + beta-alanine + ATP = (R)-pantothenate + AMP + diphosphate + H(+). It functions in the pathway cofactor biosynthesis; (R)-pantothenate biosynthesis; (R)-pantothenate from (R)-pantoate and beta-alanine: step 1/1. Catalyzes the condensation of pantoate with beta-alanine in an ATP-dependent reaction via a pantoyl-adenylate intermediate. This is Pantothenate synthetase from Thermotoga neapolitana.